The primary structure comprises 113 residues: U11-theraphotoxin-Hhn1a (113 aa).

The signal sequence occupies residues 1 to 21 (MNTVRVTFLLVFVLAVSLGQA). A propeptide spanning residues 22-74 (DKDENRMEMQGKTEQGKSYLDFAENLLLQKLEELEAKLLEEDSEESRNSRQKR) is cleaved from the precursor. 3 disulfide bridges follow: Cys75-Cys90, Cys82-Cys95, and Cys89-Cys110.

The protein belongs to the neurotoxin 14 (magi-1) family. 01 (HNTX-16) subfamily. As to expression, expressed by the venom gland.

The protein localises to the secreted. In terms of biological role, probable ion channel inhibitor. The sequence is that of U11-theraphotoxin-Hhn1a from Cyriopagopus hainanus (Chinese bird spider).